Here is a 342-residue protein sequence, read N- to C-terminus: Holliday junction branch migration complex subunit RuvB (342 aa).

The large ATPase domain (RuvB-L) stretch occupies residues T2 to Y181. ATP contacts are provided by L20, R21, G62, K65, T66, T67, R171, Y181, and R218. Position 66 (T66) interacts with Mg(2+). The interval S182–E252 is small ATPAse domain (RuvB-S). The interval K255–E342 is head domain (RuvB-H). Residues R291, R310, and R315 each coordinate DNA.

Belongs to the RuvB family. As to quaternary structure, homohexamer. Forms an RuvA(8)-RuvB(12)-Holliday junction (HJ) complex. HJ DNA is sandwiched between 2 RuvA tetramers; dsDNA enters through RuvA and exits via RuvB. An RuvB hexamer assembles on each DNA strand where it exits the tetramer. Each RuvB hexamer is contacted by two RuvA subunits (via domain III) on 2 adjacent RuvB subunits; this complex drives branch migration. In the full resolvosome a probable DNA-RuvA(4)-RuvB(12)-RuvC(2) complex forms which resolves the HJ.

Its subcellular location is the cytoplasm. It catalyses the reaction ATP + H2O = ADP + phosphate + H(+). Its function is as follows. The RuvA-RuvB-RuvC complex processes Holliday junction (HJ) DNA during genetic recombination and DNA repair, while the RuvA-RuvB complex plays an important role in the rescue of blocked DNA replication forks via replication fork reversal (RFR). RuvA specifically binds to HJ cruciform DNA, conferring on it an open structure. The RuvB hexamer acts as an ATP-dependent pump, pulling dsDNA into and through the RuvAB complex. RuvB forms 2 homohexamers on either side of HJ DNA bound by 1 or 2 RuvA tetramers; 4 subunits per hexamer contact DNA at a time. Coordinated motions by a converter formed by DNA-disengaged RuvB subunits stimulates ATP hydrolysis and nucleotide exchange. Immobilization of the converter enables RuvB to convert the ATP-contained energy into a lever motion, pulling 2 nucleotides of DNA out of the RuvA tetramer per ATP hydrolyzed, thus driving DNA branch migration. The RuvB motors rotate together with the DNA substrate, which together with the progressing nucleotide cycle form the mechanistic basis for DNA recombination by continuous HJ branch migration. Branch migration allows RuvC to scan DNA until it finds its consensus sequence, where it cleaves and resolves cruciform DNA. This Novosphingobium aromaticivorans (strain ATCC 700278 / DSM 12444 / CCUG 56034 / CIP 105152 / NBRC 16084 / F199) protein is Holliday junction branch migration complex subunit RuvB.